A 618-amino-acid chain; its full sequence is MKRDVRILLLGEAQVGKTSLIMALVGEEFPEEVPPRAEEITIPADVTPEKVPTHIVDYSESEQTEDELQEEIAKANVVCVVYDVTKEATIEKIRTKWIPMVNGGAEKGARIPIILVGNKSDLQMGSSMEVILPIMNQFSEIETCVECSAKNLKNISELFYYAQKAVLHPTAPLYDPEEKQLRPACSRALTRIFNLSDQDNNQILSDDELNYFQKSCFGNPLAPQALEDVKMVVWKNTTDGVQDNGLTLNGFLFLNTLFIQRGRHETTWTILRRFGYDDELELTDDYLYPQFRLPPGCSTELNHLGYQFLQRLFEKHDKDQDGALSPAELQNFFSVFPCMPWGPELYNTVCTTDKGLLSLHGFLCQWTLIAYLDVRHCLECLGYLGYPILSEQDSQTQALTVTREKRIDLEKGQTQRNVFLCKVLGARGAGKSAFLQAFLGRSLAAQRESPGEPSPYTINTVQVNGQEKYLILHEVSAETQFTKPSDAACDVACLIYDLSDPKSFSYCASIYKQHYMDSQIPCVFVASKTDLPEASQQPGLSPAEFCYKHCLPPPFLFSCHSQGPPGTAIYTKLATAATFPHLNAVELGAASFWLRVALGAAVTALVGFTLYRVLAKNK.

Topologically, residues 1–591 are cytoplasmic; it reads MKRDVRILLL…LNAVELGAAS (591 aa). Residues 2–168 enclose the Miro 1 domain; the sequence is KRDVRILLLG…FYYAQKAVLH (167 aa). Residues Gly-16, Lys-17, Thr-18, and Ser-19 each coordinate GTP. Thr-18 provides a ligand contact to Mg(2+). 2 residues coordinate Mg(2+): Pro-35 and Asp-57. The GTP site is built by Ser-59, Asn-118, Lys-119, Asp-121, Ala-149, and Lys-150. EF-hand domains are found at residues 184-219 and 304-339; these read ACSR…CFGN and LGYQ…FPCM. The Ca(2+) site is built by Asp-197, Asp-199, Asn-201, Glu-208, Asp-317, Asp-319, Asp-321, and Glu-328. Positions 416–579 constitute a Miro 2 domain; it reads RNVFLCKVLG…YTKLATAATF (164 aa). 5 residues coordinate GTP: Gly-428, Gly-430, Lys-431, Ser-432, and Ala-433. Ser-432 is a Mg(2+) binding site. Mg(2+) is bound at residue Glu-474. Residues Lys-528, Asp-530, and Cys-559 each contribute to the GTP site. Residues 592 to 614 form a helical; Anchor for type IV membrane protein membrane-spanning segment; the sequence is FWLRVALGAAVTALVGFTLYRVL. Residues 615 to 618 are Mitochondrial intermembrane-facing; it reads AKNK.

The protein belongs to the mitochondrial Rho GTPase family. As to quaternary structure, homodimer.

It localises to the mitochondrion outer membrane. The catalysed reaction is GTP + H2O = GDP + phosphate + H(+). It catalyses the reaction ATP + H2O = ADP + phosphate + H(+). It carries out the reaction UTP + H2O = UDP + phosphate + H(+). Atypical mitochondrial nucleoside-triphosphatase (NTPase) involved in mitochondrial trafficking. Probably involved in control of anterograde transport of mitochondria and their subcellular distribution. Can hydrolyze GTP, ATP and UTP. The sequence is that of Mitochondrial Rho GTPase 2 (RHOT2) from Gallus gallus (Chicken).